Here is a 333-residue protein sequence, read N- to C-terminus: Meiotic drive suppressor wtf9 (333 aa).

Residues 1 to 69 (MKNNYTSLKS…ENHSSGTTDN (69 aa)) form a disordered region. Residues 19 to 30 (KTDHEIDLEKGP) show a composition bias toward basic and acidic residues. 4 helical membrane-spanning segments follow: residues 73 to 95 (LLIK…VCYL), 108 to 130 (VEWT…LTYF), 174 to 191 (WVVI…TLFL), and 204 to 226 (LICS…RLPF).

Belongs to the WTF family. In terms of assembly, homomer. Interacts with other proteins that exhibit high sequence similarity.

It is found in the spore membrane. The protein resides in the vacuole membrane. Its function is as follows. Acts as a suppressor component of the dual wtf meiotic drive system, and can suppress but not confer meiotic drive by compatible poisons. Wtf meiotic drive systems promote unequal transmission of alleles from the parental zygote to progeny spores by encoding a poison and an antidote from the same locus; the poison is trans-acting and forms toxic aggregates in all spores within an ascus, wherease the antidote is spore-specific and targets aggregates for degradation by the vacuole. Meiotic drive by wtf systems therefore lead to poisoning of all progeny that do not inherit the dual poison/antidote allele, or express a compatible antidote. This Schizosaccharomyces pombe (strain 972 / ATCC 24843) (Fission yeast) protein is Meiotic drive suppressor wtf9.